A 416-amino-acid chain; its full sequence is Kelch repeat-containing protein At1g19460 (416 aa).

Residues 1–11 show a composition bias toward polar residues; sequence MANISEISGDS. The disordered stretch occupies residues 1 to 55; sequence MANISEISGDSNDGGDPNKKPEEQVLRRSRRIATRNENQNKKPKEEEEKDNRSVS. Basic and acidic residues-rich tracts occupy residues 16-26 and 38-52; these read DPNKKPEEQVL and NQNK…KDNR. Kelch repeat units follow at residues 156–202, 203–250, 255–293, and 294–344; these read EMYV…VFDG, KIYV…FAHA, KLYI…PCTM, and QCVI…SDGS.

The polypeptide is Kelch repeat-containing protein At1g19460 (Arabidopsis thaliana (Mouse-ear cress)).